Consider the following 760-residue polypeptide: Heat shock transcription factor (760 aa).

Disordered regions lie at residues 1-132 and 206-276; these read MIMN…PPVV and FHPL…GPKT. 2 stretches are compositionally biased toward polar residues: residues 19-31 and 38-88; these read TESN…SSPS and RSGT…SNKL. Residues 119-130 are compositionally biased toward basic and acidic residues; the sequence is DYKDSIDLDKPP. A compositionally biased stretch (low complexity) spans 221–247; sequence AGPANNSQQQQQQQQQDSSIPSDGISS. A DNA-binding region spans residues 276-385; sequence TRPAFVMKIW…EDLLDKIVRN (110 aa). An involved in trimerization region spans residues 414–467; that stretch reads ELETIKMNQYVISEDLRRVRQDNKMLWQENYLNRERNQVQGRTLDKILKFLSVV. 4 disordered regions span residues 492 to 545, 560 to 582, 609 to 630, and 674 to 760; these read TQYR…NNNN, LTNR…EGSI, HQPG…SAPS, and QEQH…VSDH. The segment covering 515-539 has biased composition (polar residues); it reads NSRFARDNNQTAQPTYESPLSTSDT. Position 570 is a phosphoserine (serine 570). Threonine 574 bears the Phosphothreonine mark. Residue serine 576 is modified to Phosphoserine. Position 577 is a phosphothreonine (threonine 577). Positions 613–628 are enriched in low complexity; the sequence is ATTNNNNHSSSTAISA. Positions 646-684 form a coiled coil; that stretch reads RNLDDLEKHINKEGQSIQQVQDWIDKLAQEQHEKQQQQQ. Composition is skewed to polar residues over residues 701–722 and 731–742; these read ATTT…NISF and PGSNVSSNINDS. Residues 744-760 show a composition bias toward basic and acidic residues; the sequence is GNEKKSKKRSIEEVSDH.

The protein belongs to the HSF family. In terms of assembly, homotrimer. Homotrimerization increases the affinity of HSF1 to DNA. Interacts with HSP90. In terms of processing, activated by phosphorylation of at least Ser-570, Thr-574, Ser-576 and Thr-577 in response to heat shock. Additional unidentified residues are also phosphorylated in response to heat shock.

The protein resides in the nucleus. Functionally, DNA-binding transcription factor that specifically binds heat shock promoter elements (HSE) and activates transcription. With HSP90, is required for the modulation of the chaperone levels in response to growth temperature, rather than the activation of acute responses to sudden thermal transitions. Activated during infection and contributes to full virulence. The polypeptide is Heat shock transcription factor (Candida albicans (strain SC5314 / ATCC MYA-2876) (Yeast)).